The chain runs to 149 residues: Large ribosomal subunit protein bL9 (149 aa).

It belongs to the bacterial ribosomal protein bL9 family.

Functionally, binds to the 23S rRNA. This Edwardsiella ictaluri (strain 93-146) protein is Large ribosomal subunit protein bL9.